A 316-amino-acid chain; its full sequence is Mannose-6-phosphate isomerase (316 aa).

Residues Q95, H97, E114, and H171 each coordinate Zn(2+). Residue R191 is part of the active site.

Belongs to the mannose-6-phosphate isomerase type 1 family. Zn(2+) is required as a cofactor.

The catalysed reaction is D-mannose 6-phosphate = D-fructose 6-phosphate. The polypeptide is Mannose-6-phosphate isomerase (pmi) (Streptococcus mutans serotype c (strain ATCC 700610 / UA159)).